Consider the following 123-residue polypeptide: Ribonuclease P protein component (123 aa).

The protein belongs to the RnpA family. Consists of a catalytic RNA component (M1 or rnpB) and a protein subunit.

The catalysed reaction is Endonucleolytic cleavage of RNA, removing 5'-extranucleotides from tRNA precursor.. Its function is as follows. RNaseP catalyzes the removal of the 5'-leader sequence from pre-tRNA to produce the mature 5'-terminus. It can also cleave other RNA substrates such as 4.5S RNA. The protein component plays an auxiliary but essential role in vivo by binding to the 5'-leader sequence and broadening the substrate specificity of the ribozyme. In Streptomyces avermitilis (strain ATCC 31267 / DSM 46492 / JCM 5070 / NBRC 14893 / NCIMB 12804 / NRRL 8165 / MA-4680), this protein is Ribonuclease P protein component.